We begin with the raw amino-acid sequence, 723 residues long: Peroxisomal bifunctional enzyme (723 aa).

The enoyl-CoA hydratase / isomerase stretch occupies residues 1 to 282 (MAEYTRLHNA…LAERKANKWS (282 aa)). Position 38 is an N6-succinyllysine (Lys38). Gly101 contributes to the substrate binding site. Residue Lys165 is modified to N6-acetyllysine; alternate. Lys165 is modified (N6-succinyllysine; alternate). Residue Lys171 is modified to N6-acetyllysine. Lys219 is modified (N6-acetyllysine; alternate). Lys219 carries the N6-succinyllysine; alternate modification. Position 250 is an N6-acetyllysine (Lys250). N6-succinyllysine occurs at positions 280 and 290. Residues 283-572 (TPSGASWKTA…DVLCELGRFG (290 aa)) form a 3-hydroxyacyl-CoA dehydrogenase region. Lys346, Lys350, and Lys464 each carry N6-acetyllysine. Lys532 is modified (N6-succinyllysine). Residue Thr548 is modified to Phosphothreonine. Lys577 bears the N6-succinyllysine mark. N6-acetyllysine; alternate occurs at positions 584, 591, and 710. N6-succinyllysine; alternate occurs at positions 584, 591, and 710. The tract at residues 699–723 (KKLASQGNPPQKEWQSLAGSPSSKL) is disordered. Over residues 703 to 723 (SQGNPPQKEWQSLAGSPSSKL) the composition is skewed to polar residues. Ser718 carries the phosphoserine modification. Residues 721–723 (SKL) carry the Microbody targeting signal motif. Position 722 is an N6-succinyllysine (Lys722).

The protein in the N-terminal section; belongs to the enoyl-CoA hydratase/isomerase family. This sequence in the C-terminal section; belongs to the 3-hydroxyacyl-CoA dehydrogenase family. Monomer. In terms of processing, acetylated, leading to enhanced enzyme activity. Acetylation is enhanced by up to 80% after treatment either with trichostin A (TSA) or with nicotinamide (NAM) with highest increase on Lys-346. Acetylation and enzyme activity increased by about 1.5% on addition of fatty acids.

Its subcellular location is the peroxisome. It catalyses the reaction a (3S)-3-hydroxyacyl-CoA = a (2E)-enoyl-CoA + H2O. The catalysed reaction is a 4-saturated-(3S)-3-hydroxyacyl-CoA = a (3E)-enoyl-CoA + H2O. The enzyme catalyses a (3Z)-enoyl-CoA = a 4-saturated (2E)-enoyl-CoA. It carries out the reaction a (3E)-enoyl-CoA = a 4-saturated (2E)-enoyl-CoA. It catalyses the reaction a (3S)-3-hydroxyacyl-CoA + NAD(+) = a 3-oxoacyl-CoA + NADH + H(+). The catalysed reaction is (2S,3S)-3-hydroxy-2-methylbutanoyl-CoA = (2E)-2-methylbut-2-enoyl-CoA + H2O. The enzyme catalyses (3S)-hydroxyhexadecanoyl-CoA + NAD(+) = 3-oxohexadecanoyl-CoA + NADH + H(+). It carries out the reaction (3S)-hydroxyhexadecanoyl-CoA = (2E)-hexadecenoyl-CoA + H2O. It catalyses the reaction (2E)-hexadecenedioyl-CoA + H2O = (3S)-hydroxyhexadecanedioyl-CoA. The catalysed reaction is (3S)-hydroxyhexadecanedioyl-CoA + NAD(+) = 3-oxohexadecanedioyl-CoA + NADH + H(+). The enzyme catalyses (3E,5Z)-tetradecadienoyl-CoA = (2E,5Z)-tetradecadienoyl-CoA. It carries out the reaction (3E,5Z)-octadienoyl-CoA = (2E,5Z)-octadienoyl-CoA. It catalyses the reaction (3S)-hydroxydecanoyl-CoA + NAD(+) = 3-oxodecanoyl-CoA + NADH + H(+). The catalysed reaction is (3E)-decenoyl-CoA = (2E)-decenoyl-CoA. The enzyme catalyses (3Z)-hexenoyl-CoA = (2E)-hexenoyl-CoA. It carries out the reaction (3E)-hexenoyl-CoA = (2E)-hexenoyl-CoA. It catalyses the reaction (3S)-hydroxydecanoyl-CoA = (2E)-decenoyl-CoA + H2O. The catalysed reaction is (3S)-hydroxyhexanoyl-CoA = (2E)-hexenoyl-CoA + H2O. It functions in the pathway lipid metabolism; fatty acid beta-oxidation. With respect to regulation, enzyme activity enhanced by acetylation. Its function is as follows. Peroxisomal trifunctional enzyme possessing 2-enoyl-CoA hydratase, 3-hydroxyacyl-CoA dehydrogenase, and delta 3, delta 2-enoyl-CoA isomerase activities. Catalyzes two of the four reactions of the long chain fatty acids peroxisomal beta-oxidation pathway. Can also use branched-chain fatty acids such as 2-methyl-2E-butenoyl-CoA as a substrate, which is hydrated into (2S,3S)-3-hydroxy-2-methylbutanoyl-CoA. Optimal isomerase for 2,5 double bonds into 3,5 form isomerization in a range of enoyl-CoA species. Also able to isomerize both 3-cis and 3-trans double bonds into the 2-trans form in a range of enoyl-CoA species. Regulates the amount of medium-chain dicarboxylic fatty acids which are essential regulators of all fatty acid oxidation pathways. Also involved in the degradation of long-chain dicarboxylic acids through peroxisomal beta-oxidation. The polypeptide is Peroxisomal bifunctional enzyme (EHHADH) (Pongo abelii (Sumatran orangutan)).